The following is a 227-amino-acid chain: ATP-dependent Clp protease proteolytic subunit (227 aa).

Residue serine 120 is the Nucleophile of the active site. Histidine 145 is a catalytic residue.

It belongs to the peptidase S14 family. As to quaternary structure, fourteen ClpP subunits assemble into 2 heptameric rings which stack back to back to give a disk-like structure with a central cavity, resembling the structure of eukaryotic proteasomes.

The protein localises to the cytoplasm. The enzyme catalyses Hydrolysis of proteins to small peptides in the presence of ATP and magnesium. alpha-casein is the usual test substrate. In the absence of ATP, only oligopeptides shorter than five residues are hydrolyzed (such as succinyl-Leu-Tyr-|-NHMec, and Leu-Tyr-Leu-|-Tyr-Trp, in which cleavage of the -Tyr-|-Leu- and -Tyr-|-Trp bonds also occurs).. In terms of biological role, cleaves peptides in various proteins in a process that requires ATP hydrolysis. Has a chymotrypsin-like activity. Plays a major role in the degradation of misfolded proteins. This Rickettsia bellii (strain RML369-C) protein is ATP-dependent Clp protease proteolytic subunit.